A 60-amino-acid polypeptide reads, in one-letter code: Small ribosomal subunit protein bS21 (60 aa).

Positions 41–60 (PEEKRKRKAIARRRQRSRRR) are disordered. The segment covering 45 to 60 (RKRKAIARRRQRSRRR) has biased composition (basic residues).

The protein belongs to the bacterial ribosomal protein bS21 family.

The protein is Small ribosomal subunit protein bS21 of Gloeothece citriformis (strain PCC 7424) (Cyanothece sp. (strain PCC 7424)).